Here is a 668-residue protein sequence, read N- to C-terminus: DNA ligase (668 aa).

NAD(+)-binding positions include 34–38, 83–84, and E113; these read DAEYD and SL. The active-site N6-AMP-lysine intermediate is K115. The NAD(+) site is built by R136, E170, K286, and K310. Zn(2+)-binding residues include C404, C407, C422, and C427. Residues 590 to 668 enclose the BRCT domain; it reads ESDSYFAGKT…EVKMLEELKK (79 aa).

It belongs to the NAD-dependent DNA ligase family. LigA subfamily. Requires Mg(2+) as cofactor. It depends on Mn(2+) as a cofactor.

The enzyme catalyses NAD(+) + (deoxyribonucleotide)n-3'-hydroxyl + 5'-phospho-(deoxyribonucleotide)m = (deoxyribonucleotide)n+m + AMP + beta-nicotinamide D-nucleotide.. Functionally, DNA ligase that catalyzes the formation of phosphodiester linkages between 5'-phosphoryl and 3'-hydroxyl groups in double-stranded DNA using NAD as a coenzyme and as the energy source for the reaction. It is essential for DNA replication and repair of damaged DNA. The sequence is that of DNA ligase from Bacillus pumilus (strain SAFR-032).